The following is a 473-amino-acid chain: Probable serine/threonine-protein kinase glkA (473 aa).

Positions 1-84 (MTIPTDNNSS…QSSSTATVNS (84 aa)) are disordered. The segment covering 7 to 84 (NNSSNNKGYN…QSSSTATVNS (78 aa)) has biased composition (low complexity). A Protein kinase domain is found at 91-366 (YEIIKQVGQG…IDEIIAHPFL (276 aa)). ATP contacts are provided by residues 97-105 (VGQGTFGKV) and lysine 119. Catalysis depends on aspartate 208, which acts as the Proton acceptor. 2 disordered regions span residues 389 to 418 (GKSS…SNNK) and 437 to 473 (SSNL…TNTI). The span at 442–466 (SIDNSNNGKSSSSSNNIPSLNNSNN) shows a compositional bias: low complexity.

Belongs to the protein kinase superfamily. CMGC Ser/Thr protein kinase family. GSK-3 subfamily.

It carries out the reaction L-seryl-[tau protein] + ATP = O-phospho-L-seryl-[tau protein] + ADP + H(+). The enzyme catalyses L-threonyl-[tau protein] + ATP = O-phospho-L-threonyl-[tau protein] + ADP + H(+). The protein is Probable serine/threonine-protein kinase glkA (glkA) of Dictyostelium discoideum (Social amoeba).